The chain runs to 1442 residues: DNA polymerase III PolC-type (1442 aa).

The Exonuclease domain occupies 426–582 (YVVFDVETTG…YDTEATAYIF (157 aa)).

The protein belongs to the DNA polymerase type-C family. PolC subfamily.

The protein resides in the cytoplasm. The enzyme catalyses DNA(n) + a 2'-deoxyribonucleoside 5'-triphosphate = DNA(n+1) + diphosphate. Required for replicative DNA synthesis. This DNA polymerase also exhibits 3' to 5' exonuclease activity. This chain is DNA polymerase III PolC-type, found in Staphylococcus epidermidis (strain ATCC 12228 / FDA PCI 1200).